Reading from the N-terminus, the 151-residue chain is Large ribosomal subunit protein eL8 (151 aa).

The protein belongs to the eukaryotic ribosomal protein eL8 family. Part of the 50S ribosomal subunit. Probably part of the RNase P complex.

It is found in the cytoplasm. Multifunctional RNA-binding protein that recognizes the K-turn motif in ribosomal RNA, the RNA component of RNase P, box H/ACA, box C/D and box C'/D' sRNAs. In Pyrobaculum neutrophilum (strain DSM 2338 / JCM 9278 / NBRC 100436 / V24Sta) (Thermoproteus neutrophilus), this protein is Large ribosomal subunit protein eL8.